A 200-amino-acid polypeptide reads, in one-letter code: Peptidyl-tRNA hydrolase (200 aa).

Tyr16 is a binding site for tRNA. His21 acts as the Proton acceptor in catalysis. TRNA-binding residues include Phe67, Asn69, and Asn115.

The protein belongs to the PTH family. As to quaternary structure, monomer.

Its subcellular location is the cytoplasm. The enzyme catalyses an N-acyl-L-alpha-aminoacyl-tRNA + H2O = an N-acyl-L-amino acid + a tRNA + H(+). Its function is as follows. Hydrolyzes ribosome-free peptidyl-tRNAs (with 1 or more amino acids incorporated), which drop off the ribosome during protein synthesis, or as a result of ribosome stalling. Catalyzes the release of premature peptidyl moieties from peptidyl-tRNA molecules trapped in stalled 50S ribosomal subunits, and thus maintains levels of free tRNAs and 50S ribosomes. The sequence is that of Peptidyl-tRNA hydrolase from Prochlorococcus marinus (strain MIT 9312).